Here is an 890-residue protein sequence, read N- to C-terminus: Alanine--tRNA ligase (890 aa).

Zn(2+) is bound by residues histidine 567, histidine 571, cysteine 680, and histidine 684.

Belongs to the class-II aminoacyl-tRNA synthetase family. Zn(2+) is required as a cofactor.

The protein localises to the cytoplasm. It catalyses the reaction tRNA(Ala) + L-alanine + ATP = L-alanyl-tRNA(Ala) + AMP + diphosphate. Its function is as follows. Catalyzes the attachment of alanine to tRNA(Ala) in a two-step reaction: alanine is first activated by ATP to form Ala-AMP and then transferred to the acceptor end of tRNA(Ala). Also edits incorrectly charged Ser-tRNA(Ala) and Gly-tRNA(Ala) via its editing domain. The sequence is that of Alanine--tRNA ligase from Ruegeria pomeroyi (strain ATCC 700808 / DSM 15171 / DSS-3) (Silicibacter pomeroyi).